The following is a 263-amino-acid chain: Acyl-[acyl-carrier-protein]--UDP-N-acetylglucosamine O-acyltransferase (263 aa).

Belongs to the transferase hexapeptide repeat family. LpxA subfamily. As to quaternary structure, homotrimer.

It is found in the cytoplasm. It catalyses the reaction a (3R)-hydroxyacyl-[ACP] + UDP-N-acetyl-alpha-D-glucosamine = a UDP-3-O-[(3R)-3-hydroxyacyl]-N-acetyl-alpha-D-glucosamine + holo-[ACP]. It participates in glycolipid biosynthesis; lipid IV(A) biosynthesis; lipid IV(A) from (3R)-3-hydroxytetradecanoyl-[acyl-carrier-protein] and UDP-N-acetyl-alpha-D-glucosamine: step 1/6. Involved in the biosynthesis of lipid A, a phosphorylated glycolipid that anchors the lipopolysaccharide to the outer membrane of the cell. This Tolumonas auensis (strain DSM 9187 / NBRC 110442 / TA 4) protein is Acyl-[acyl-carrier-protein]--UDP-N-acetylglucosamine O-acyltransferase.